Here is a 185-residue protein sequence, read N- to C-terminus: Elongation factor P (185 aa).

It belongs to the elongation factor P family.

It localises to the cytoplasm. Its pathway is protein biosynthesis; polypeptide chain elongation. Its function is as follows. Involved in peptide bond synthesis. Stimulates efficient translation and peptide-bond synthesis on native or reconstituted 70S ribosomes in vitro. Probably functions indirectly by altering the affinity of the ribosome for aminoacyl-tRNA, thus increasing their reactivity as acceptors for peptidyl transferase. This chain is Elongation factor P, found in Streptococcus pyogenes serotype M28 (strain MGAS6180).